Here is a 326-residue protein sequence, read N- to C-terminus: uncharacterized protein (326 aa).

127–134 is a binding site for ATP; it reads GATGSGKS.

The protein belongs to the GSP E family.

This is an uncharacterized protein from Escherichia coli (strain K12).